Consider the following 315-residue polypeptide: Tubulin beta-1 chain (315 aa).

Residues serine 6, glycine 10, threonine 11, glycine 12, asparagine 72, and asparagine 94 each contribute to the GTP site. Positions 295–315 (DATADEEEYYEDEEEEEAQGM) are disordered. The span at 297–315 (TADEEEYYEDEEEEEAQGM) shows a compositional bias: acidic residues.

This sequence belongs to the tubulin family. Dimer of alpha and beta chains. A typical microtubule is a hollow water-filled tube with an outer diameter of 25 nm and an inner diameter of 15 nM. Alpha-beta heterodimers associate head-to-tail to form protofilaments running lengthwise along the microtubule wall with the beta-tubulin subunit facing the microtubule plus end conferring a structural polarity. Microtubules usually have 13 protofilaments but different protofilament numbers can be found in some organisms and specialized cells. Mg(2+) is required as a cofactor.

The protein localises to the cytoplasm. The protein resides in the cytoskeleton. Its function is as follows. Tubulin is the major constituent of microtubules, a cylinder consisting of laterally associated linear protofilaments composed of alpha- and beta-tubulin heterodimers. Microtubules grow by the addition of GTP-tubulin dimers to the microtubule end, where a stabilizing cap forms. Below the cap, tubulin dimers are in GDP-bound state, owing to GTPase activity of alpha-tubulin. The sequence is that of Tubulin beta-1 chain (TUBB1) from Daucus carota (Wild carrot).